A 101-amino-acid chain; its full sequence is Glutenin, high molecular weight subunit PC256 (101 aa).

The segment covering 1 to 27 has biased composition (polar residues); the sequence is EKLGQGQQPRQWLQPRQGQQGYYPTSP. The interval 1–65 is disordered; that stretch reads EKLGQGQQPR…QGYDSPYHVS (65 aa). The span at 41-62 shows a compositional bias: low complexity; it reads QGYYPTSPQQSGQGQQGYDSPY.

Belongs to the gliadin/glutenin family. In terms of assembly, disulfide-bridge linked aggregates.

In terms of biological role, glutenins are high-molecular weight seed storage proteins of wheat endosperm. Thought to be responsible for the visco-elastic property of wheat dough. This is Glutenin, high molecular weight subunit PC256 from Triticum aestivum (Wheat).